A 25-amino-acid polypeptide reads, in one-letter code: Fructokinase-1 (25 aa).

It belongs to the ROK (NagC/XylR) family. In terms of assembly, homodimer. Requires Mg(2+) as cofactor.

It catalyses the reaction D-fructose + ATP = D-fructose 6-phosphate + ADP + H(+). With respect to regulation, inhibition by zinc ions (Potential). Inactivated by EDTA. The chain is Fructokinase-1 from Lactococcus lactis subsp. lactis (Streptococcus lactis).